Reading from the N-terminus, the 637-residue chain is tRNA uridine 5-carboxymethylaminomethyl modification enzyme MnmG (637 aa).

FAD-binding positions include 15-20, Ile127, and Ser182; that span reads GAGHAG. An NAD(+)-binding site is contributed by 276–290; that stretch reads GPRYCPSIEDKIVRF. An FAD-binding site is contributed by Gln373.

The protein belongs to the MnmG family. As to quaternary structure, homodimer. Heterotetramer of two MnmE and two MnmG subunits. It depends on FAD as a cofactor.

It is found in the cytoplasm. Its function is as follows. NAD-binding protein involved in the addition of a carboxymethylaminomethyl (cmnm) group at the wobble position (U34) of certain tRNAs, forming tRNA-cmnm(5)s(2)U34. This Streptococcus pneumoniae serotype 4 (strain ATCC BAA-334 / TIGR4) protein is tRNA uridine 5-carboxymethylaminomethyl modification enzyme MnmG.